The chain runs to 443 residues: Sensor histidine protein kinase HK06 (443 aa).

2 helical membrane passes run 16–36 (FAILGGVGLVIHIAIYLTFPF) and 140–160 (ILLLYLPYTFLVTIAFSFVFS). The 53-residue stretch at 165–217 (KRLLNPLFYISEVTSKMQDLDDNIRFDESRKDEVGEVGKQINGMYEHLLKVIH) folds into the HAMP domain. In terms of domain architecture, Histidine kinase spans 239-443 (GASHELKTPL…EHGMEFKISL (205 aa)). His-242 bears the Phosphohistidine; by autocatalysis mark.

It localises to the cell membrane. The catalysed reaction is ATP + protein L-histidine = ADP + protein N-phospho-L-histidine.. Its function is as follows. Member of the two-component regulatory system HK06/RR06 involved in regulation of target genes, including choline-binding protein CbpA. Has been shown in one study to not be required for regulation of expression of choline-binding protein CbpA. The chain is Sensor histidine protein kinase HK06 from Streptococcus pneumoniae serotype 2 (strain D39 / NCTC 7466).